The primary structure comprises 274 residues: MLRQTAFRSMKLNRTPGRYFTTAENMDTGSSQSPPDTEQKMQPMDEFTKEFLKNQIKLTELQRVILSAGSSIAALVDPRRHDMIACLGETTGVPALENIRDQMRNSDEGRQILEDKPRINTRTVNMDALKKLPENTFGYQYVSFMEKYEITPDSRMEVKFMDDPELAYVMTRYRETHDLVHTVFGMPTNMLGEVAIKWVEAINIGLPMCYGGAIFGAFRLRPKQRQNYLQRYLPWALRAGQRARPLMCVYWEKRWEQDIEELRKELNIEVLKVD.

The N-terminal 20 residues, 1 to 20 (MLRQTAFRSMKLNRTPGRYF), are a transit peptide targeting the mitochondrion. Positions 13 to 40 (NRTPGRYFTTAENMDTGSSQSPPDTEQK) are disordered. The segment covering 22–36 (TAENMDTGSSQSPPD) has biased composition (polar residues). The Zn(2+) site is built by His177, Asp178, His181, and Glu193.

Belongs to the COQ4 family. As to quaternary structure, component of a multi-subunit COQ enzyme complex. The cofactor is Zn(2+).

Its subcellular location is the mitochondrion inner membrane. It carries out the reaction a 4-hydroxy-3-methoxy-5-(all-trans-polyprenyl)benzoate + H(+) = a 2-methoxy-6-(all-trans-polyprenyl)phenol + CO2. Its pathway is cofactor biosynthesis; ubiquinone biosynthesis. Functionally, lyase that catalyzes the C1-decarboxylation of 4-hydroxy-3-methoxy-5-(all-trans-polyprenyl)benzoic acid into 2-methoxy-6-(all-trans-polyprenyl)phenol during ubiquinone biosynthesis. This Aedes aegypti (Yellowfever mosquito) protein is Ubiquinone biosynthesis protein COQ4 homolog, mitochondrial.